The following is a 325-amino-acid chain: Brain mitochondrial carrier protein 1 (325 aa).

The next 6 membrane-spanning stretches (helical) occupy residues 38–54, 112–128, 145–165, 199–215, 240–256, and 298–315; these read GLNWKPFVYGGLASIVA, LRQASYGTIKIGIYQSL, MICGVVSGVISSTIANPTDVL, GVVPTAQRAAIVVGVEL, VSSFTCGLAGALASNPV, and GFWPNWLRLGPWNIIFFI. 3 Solcar repeats span residues 42-131, 139-224, and 233-323; these read KPFV…LKRL, ETLL…TKKH, and DTIL…LKRL.

Belongs to the mitochondrial carrier (TC 2.A.29) family. As to quaternary structure, homotetramer. As to expression, mainly expressed in brain, particularly abundant in cortex, hippocampus thalamus, amygdala and hypothalamus. Highly expressed in heart and kidney, but not liver or lung (at protein level). In the nervous system, expressed in cortex, basal ganglia, substantia nigra, cerebellum, and spinal cord (at protein level).

Its subcellular location is the mitochondrion inner membrane. It catalyses the reaction sulfite(in) + sulfate(out) = sulfite(out) + sulfate(in). The catalysed reaction is thiosulfate(in) + sulfate(out) = thiosulfate(out) + sulfate(in). The enzyme catalyses sulfate(out) + phosphate(in) = sulfate(in) + phosphate(out). It carries out the reaction oxalate(in) + sulfate(out) = oxalate(out) + sulfate(in). It catalyses the reaction malonate(in) + sulfate(out) = malonate(out) + sulfate(in). The catalysed reaction is maleate(in) + sulfate(out) = maleate(out) + sulfate(in). The enzyme catalyses (S)-malate(in) + sulfate(out) = (S)-malate(out) + sulfate(in). It carries out the reaction (3S)-citramalate(in) + sulfate(out) = (3S)-citramalate(out) + sulfate(in). It catalyses the reaction (3R)-citramalate(in) + sulfate(out) = (3R)-citramalate(out) + sulfate(in). The catalysed reaction is sulfate(out) + succinate(in) = sulfate(in) + succinate(out). The enzyme catalyses (S,S)-tartrate(in) + sulfate(out) = (S,S)-tartrate(out) + sulfate(in). It carries out the reaction (2R,3R)-tartrate(in) + sulfate(out) = (2R,3R)-tartrate(out) + sulfate(in). It catalyses the reaction D-aspartate(in) + sulfate(out) = D-aspartate(out) + sulfate(in). The catalysed reaction is L-aspartate(in) + sulfate(out) = L-aspartate(out) + sulfate(in). The enzyme catalyses sulfate(in) = sulfate(out). It carries out the reaction phosphate(in) = phosphate(out). It catalyses the reaction (S)-malate(out) = (S)-malate(in). The catalysed reaction is citrate(in) = citrate(out). The enzyme catalyses L-aspartate(out) = L-aspartate(in). It carries out the reaction L-glutamate(out) = L-glutamate(in). It catalyses the reaction H(+)(in) = H(+)(out). The catalysed reaction is chloride(in) = chloride(out). Transports inorganic anions (sulfate, sulfite, thiosulfate and phosphate) and, to a lesser extent, a variety of dicarboxylates (e.g. malonate, malate and citramalate) and, even more so, aspartate and glutamate and tricarboxylates. May catalyze the export of sulfite and thiosulfate (the hydrogen sulfide degradation products) from the mitochondria, thereby modulating the level of the hydrogen sulfide. Also can mediate a very low unidirectional transport of anions including sulfate, phosphate, (S)-malate, citrate, L-aspartate and L-glutamate. Maintains oxidative balance (through uncoupling activities) and ATP production (by modifying mitochondrial membrane potential). Is able to transport protons across lipid membranes. Also exhibits transmembrane chloride transport activity to a lesser extent. May modify mitochondrial respiratory efficiency and mitochondrial oxidant production. The protein is Brain mitochondrial carrier protein 1 of Mus musculus (Mouse).